Consider the following 157-residue polypeptide: Stalk-specific protein A (157 aa).

A signal peptide spans 1-19 (MRSILILLSLLLTIAFASA).

It localises to the secreted. The protein is Stalk-specific protein A (staA) of Dictyostelium discoideum (Social amoeba).